The primary structure comprises 200 residues: Glutathione peroxidase 1 (200 aa).

A Phosphoserine modification is found at serine 31. Selenocysteine 46 is a catalytic residue. Selenocysteine 46 is a non-standard amino acid (selenocysteine). An N6-acetyllysine; alternate mark is found at lysine 85 and lysine 111. Lysine 85 and lysine 111 each carry N6-succinyllysine; alternate. Lysine 118 carries the N6-acetyllysine modification. Lysine 145 is subject to N6-acetyllysine; alternate. Position 145 is an N6-succinyllysine; alternate (lysine 145). Serine 194 carries the phosphoserine modification.

Belongs to the glutathione peroxidase family. As to quaternary structure, homotetramer. Interacts with MIEN1. In terms of processing, during periods of oxidative stress, Sec-46 may react with a superoxide radical, irreversibly lose hydroselenide and be converted to dehydroalanine.

The protein resides in the cytoplasm. It is found in the mitochondrion. The enzyme catalyses 2 glutathione + H2O2 = glutathione disulfide + 2 H2O. It carries out the reaction a hydroperoxy polyunsaturated fatty acid + 2 glutathione = a hydroxy polyunsaturated fatty acid + glutathione disulfide + H2O. The catalysed reaction is tert-butyl hydroperoxide + 2 glutathione = tert-butanol + glutathione disulfide + H2O. It catalyses the reaction cumene hydroperoxide + 2 glutathione = 2-phenylpropan-2-ol + glutathione disulfide + H2O. The enzyme catalyses (13S)-hydroperoxy-(9Z,11E)-octadecadienoate + 2 glutathione = (13S)-hydroxy-(9Z,11E)-octadecadienoate + glutathione disulfide + H2O. It carries out the reaction (9S)-hydroperoxy-(10E,12Z)-octadecadienoate + 2 glutathione = (9S)-hydroxy-(10E,12Z)-octadecadienoate + glutathione disulfide + H2O. The catalysed reaction is (5S)-hydroperoxy-(6E,8Z,11Z,14Z)-eicosatetraenoate + 2 glutathione = (5S)-hydroxy-(6E,8Z,11Z,14Z)-eicosatetraenoate + glutathione disulfide + H2O. It catalyses the reaction (12S)-hydroperoxy-(5Z,8Z,10E,14Z)-eicosatetraenoate + 2 glutathione = (12S)-hydroxy-(5Z,8Z,10E,14Z)-eicosatetraenoate + glutathione disulfide + H2O. The enzyme catalyses (12R)-hydroperoxy-(5Z,8Z,10E,14Z)-eicosatetraenoate + 2 glutathione = (12R)-hydroxy-(5Z,8Z,10E,14Z)-eicosatetraenoate + glutathione disulfide + H2O. It carries out the reaction (15S)-hydroperoxy-(5Z,8Z,11Z,13E)-eicosatetraenoate + 2 glutathione = (15S)-hydroxy-(5Z,8Z,11Z,13E)-eicosatetraenoate + glutathione disulfide + H2O. The catalysed reaction is (5S)-hydroperoxy-(6E,8Z,11Z,14Z,17Z)-eicosapentaenoate + 2 glutathione = (5S)-hydroxy-(6E,8Z,11Z,14Z,17Z)-eicosapentaenoate + glutathione disulfide + H2O. It catalyses the reaction (12S)-hydroperoxy-(5Z,8Z,10E,14Z,17Z)-eicosapentaenoate + 2 glutathione = (12S)-hydroxy-(5Z,8Z,10E,14Z,17Z)-eicosapentaenoate + glutathione disulfide + H2O. The enzyme catalyses (15S)-hydroperoxy-(5Z,8Z,11Z,13E,17Z)-eicosapentaenoate + 2 glutathione = (15S)-hydroxy-(5Z,8Z,11Z,13E,17Z)-eicosapentaenoate + glutathione disulfide + H2O. It carries out the reaction (15S)-hydroperoxy-(11Z,13E)-eicosadienoate + 2 glutathione = (15S)-hydroxy-(11Z,13E)-eicosadienoate + glutathione disulfide + H2O. The catalysed reaction is (17S)-hydroperoxy-(4Z,7Z,10Z,13Z,15E,19Z)-docosahexaenoate + 2 glutathione = (17S)-hydroxy-(4Z,7Z,10Z,13Z,15E,19Z)-docosahexaenoate + glutathione disulfide + H2O. Functionally, catalyzes the reduction of hydroperoxides in a glutathione-dependent manner thus regulating cellular redox homeostasis. Can reduce small soluble hydroperoxides such as H2O2, cumene hydroperoxide and tert-butyl hydroperoxide, as well as several fatty acid-derived hydroperoxides. In platelets catalyzes the reduction of 12-hydroperoxyeicosatetraenoic acid, the primary product of the arachidonate 12-lipoxygenase pathway. This Oryctolagus cuniculus (Rabbit) protein is Glutathione peroxidase 1 (GPX1).